Here is a 148-residue protein sequence, read N- to C-terminus: Puroindoline-A (148 aa).

The first 19 residues, 1 to 19, serve as a signal peptide directing secretion; the sequence is MKALFLIGLLALVASTAFA. The propeptide occupies 20–28; sequence QYSEVVGSY. Residues 147–148 constitute a propeptide, removed in mature form; sequence YW.

In terms of processing, five disulfide bonds are present. In terms of tissue distribution, endosperm and aleurone layer of developing kernels. In the aleurone layer, mainly localized to starch granules and the surface of the plasma membrane, forming a uniform layer, also abundant in the intercellular space. In the endosperm, mainly localized to starch granules and the plasma membrane, but less abundant in the intercellular space. Not found in roots or coleoptiles.

The protein localises to the membrane. It is found in the secreted. It localises to the extracellular space. Its function is as follows. Acts as a membranotoxin, probably through its antibacterial and antifungal activities, contributing to the defense mechanism of the plant against predators. Forms monovalent cation-selective ion channels in membranes. Has antibacterial activity against the Gram-positive bacteria S.aureus and C.michiganensis, and the Gram-negative bacteria E.coli, P.syringae pv phaseoli, A.tumefaciens and E.carotovora subsp carotovora. Acts synergistically with PINB against bacteria. Contributes to grain texture and hardness. This Triticum aestivum (Wheat) protein is Puroindoline-A (PINA).